The chain runs to 97 residues: Co-chaperonin GroES (97 aa).

This sequence belongs to the GroES chaperonin family. Heptamer of 7 subunits arranged in a ring. Interacts with the chaperonin GroEL.

It is found in the cytoplasm. Functionally, together with the chaperonin GroEL, plays an essential role in assisting protein folding. The GroEL-GroES system forms a nano-cage that allows encapsulation of the non-native substrate proteins and provides a physical environment optimized to promote and accelerate protein folding. GroES binds to the apical surface of the GroEL ring, thereby capping the opening of the GroEL channel. In Tolumonas auensis (strain DSM 9187 / NBRC 110442 / TA 4), this protein is Co-chaperonin GroES.